We begin with the raw amino-acid sequence, 341 residues long: D-aspartate oxidase (341 aa).

Residues Asp-36, Arg-37, Thr-43, Ser-44, Met-50, Gly-307, Ile-311, and Ser-312 each contribute to the FAD site. The Microbody targeting signal motif lies at Ser-339 to Leu-341.

Belongs to the DAMOX/DASOX family. Tetramer. Interacts with PEX5; the interaction is direct and required for localization of DDO to the peroxisome. Requires FAD as cofactor. Expressed in liver and kidney (at protein level). In the brain, expressed in the frontal, temporal, and occipital lobes of the cortex, hippocampus, striatum, diencephalon, brainstem, cerebellum, spinal cord, plexus choroiderus and ependyma (at protein level). Also expressed in the lung, muscle, heart, spleen, small intestine and testis (at protein level).

The protein resides in the peroxisome matrix. It is found in the cytoplasm. Its subcellular location is the cytosol. The catalysed reaction is D-aspartate + O2 + H2O = oxaloacetate + H2O2 + NH4(+). The enzyme catalyses D-glutamate + O2 + H2O = H2O2 + 2-oxoglutarate + NH4(+). With respect to regulation, inhibited by aminooxyacetic acid, malonate, meso-tartrate and potassium bromide. Selectively catalyzes the oxidative deamination of acidic amino acids. Suppresses the level of D-aspartate in the brain, an amino acid that can act as an agonist for glutamate receptors. Protects the organism from the toxicity of D-amino acids. May also function in the intestine. The protein is D-aspartate oxidase of Rattus norvegicus (Rat).